Consider the following 782-residue polypeptide: Homeotic protein proboscipedia (782 aa).

Disordered regions lie at residues Met1–Leu23, Pro153–Asn195, Met251–Ser336, Ser358–Gly380, Ile439–Pro493, and Tyr547–Glu586. Residues Glu164–Lys169 carry the Antp-type hexapeptide motif. The segment at residues Pro198–Thr257 is a DNA-binding region (homeobox). Positions Asn308–Ala321 are enriched in low complexity. The span at Gly322–Ser336 shows a compositional bias: polar residues. Positions Asn452–Phe463 are enriched in gly residues. Positions Pro464–Pro493 are enriched in low complexity. Basic residues predominate over residues Gln563–Asn580.

The protein belongs to the Antp homeobox family. Proboscipedia subfamily.

It is found in the nucleus. Its function is as follows. Sequence-specific transcription factor which is part of a developmental regulatory system that provides cells with specific positional identities on the anterior-posterior axis. Controls development of mouthparts, and labial and maxillary palps. In Drosophila melanogaster (Fruit fly), this protein is Homeotic protein proboscipedia (pb).